We begin with the raw amino-acid sequence, 100 residues long: Osteocalcin (100 aa).

Positions 1–23 (MRALTLLALLALAALCIAGQAGA) are cleaved as a signal peptide. Residues 24–51 (KPSGAESSKGAAFVSKQEGSEVVKRPRR) constitute a propeptide that is removed on maturation. The Gla domain occupies 52–98 (YLYQWLGAPVPYPDPLEPRREVCELNPDCDELADHIGFQEAYRRFYG). Ca(2+) contacts are provided by E68, E72, E75, and D81. E68 is subject to 4-carboxyglutamate; partial. E72 and E75 each carry 4-carboxyglutamate. Cysteines 74 and 80 form a disulfide.

This sequence belongs to the osteocalcin/matrix Gla protein family. Gamma-carboxyglutamate residues are formed by vitamin K dependent carboxylation by GGCX. These residues are essential for the binding of calcium. Decarboxylation promotes the hormone activity.

It is found in the secreted. In terms of biological role, bone protein that constitutes 1-2% of the total bone protein, and which acts as a negative regulator of bone formation. Functions to limit bone formation without impairing bone resorption or mineralization. It binds strongly to apatite and calcium. Its function is as follows. The uncarboxylated form acts as a hormone secreted by osteoblasts, which regulates different cellular processes, such as energy metabolism, male fertility and brain development. Regulates of energy metabolism by acting as a hormone favoring pancreatic beta-cell proliferation, insulin secretion and sensitivity and energy expenditure. Uncarboxylated osteocalcin hormone also promotes testosterone production in the testes: acts as a ligand for G protein-coupled receptor GPRC6A at the surface of Leydig cells, initiating a signaling response that promotes the expression of enzymes required for testosterone synthesis in a CREB-dependent manner. Also acts as a regulator of brain development: osteocalcin hormone crosses the blood-brain barrier and acts as a ligand for GPR158 on neurons, initiating a signaling response that prevents neuronal apoptosis in the hippocampus, favors the synthesis of all monoamine neurotransmitters and inhibits that of gamma-aminobutyric acid (GABA). Osteocalcin also crosses the placenta during pregnancy and maternal osteocalcin is required for fetal brain development. The sequence is that of Osteocalcin (BGLAP) from Homo sapiens (Human).